The chain runs to 373 residues: Zinc finger protein CONSTANS (373 aa).

A B box-type 1; atypical zinc finger spans residues 15–57 (NRARPCDTCRSNACTVYCHADSAYLCMSCDAQVHSANRVASRH). 8 residues coordinate Zn(2+): C20, C23, C43, H48, C63, C66, C86, and H91. The B box-type 2; atypical zinc finger occupies 58-108 (KRVRVCESCERAPAAFLCEADDASLCTACDSEVHSANPLARRHQRVPILPI). Positions 109–120 (SGNSFSSMTTTH) are enriched in polar residues. A disordered region spans residues 109–130 (SGNSFSSMTTTHHQSEKTMTDP). Residues 121–130 (HQSEKTMTDP) are compositionally biased toward basic and acidic residues. The CCT domain maps to 306-348 (REARVLRYREKRKTRKFEKTIRYASRKAYAEIRPRVNGRFAKR).

Belongs to the CONSTANS family. In terms of assembly, interacts with ADO3, SPA1, SPA2, SPA3 and SPA4. Interacts with MRG1 and MRG2 (via MRG domain). Interacts (via B-box) with MIP1A. Interacts with AS1 to form a functional complex regulating FT expression. Interacts with NFYC9. Component of a red light-dependent nuclear complex made of PHL, PHYB and CO. Interacts directly with PHL in the presence of PHYB. In terms of tissue distribution, expressed in leaves, shoots and shoot apical meristem. Detected in the vascular tissue of the hypocotyl, the cotyledons and the leaves. Restricted to the protoxylem and phloem in young inflorescence stems and to the phloem only in older inflorescences. Also detected in the vascular tissue of the root.

The protein localises to the nucleus. Transcription factor that acts in the long day flowering pathway and may mediate between the circadian clock and the control of flowering. Plays a role in the regulation of flowering time by acting on 'SUPPRESSOR OF OVEREXPRESSION OF CO1', 'TERMINAL FLOWER 1' and 'FLOWERING LOCUS T'. Also regulates P5CS2 and ACS10 (involved in proline and ethylene biosynthesis, respectively). Regulates the expression of NAKR1 by binding to the 5'-TGTG(N2-3)ATG-3' motif. The sequence is that of Zinc finger protein CONSTANS from Arabidopsis thaliana (Mouse-ear cress).